Reading from the N-terminus, the 213-residue chain is Glutathione S-transferase APIC (213 aa).

The GST N-terminal domain maps to 1–82; the sequence is MAIKVHGSPM…YIAHVYADNG (82 aa). Residues Ser11, 12 to 13, 40 to 41, 53 to 54, and 66 to 67 contribute to the glutathione site; these read TA, HK, QV, and ES. The region spanning 89–213 is the GST C-terminal domain; the sequence is DPKKMPIMSV…WVKGLEKLQK (125 aa).

It belongs to the GST superfamily. Phi family.

The enzyme catalyses RX + glutathione = an S-substituted glutathione + a halide anion + H(+). Its function is as follows. Conjugation of reduced glutathione to a wide number of exogenous and endogenous hydrophobic electrophiles. This is Glutathione S-transferase APIC from Nicotiana tabacum (Common tobacco).